The primary structure comprises 339 residues: Phosphate acyltransferase (339 aa).

The protein belongs to the PlsX family. In terms of assembly, homodimer. Probably interacts with PlsY.

Its subcellular location is the cytoplasm. It carries out the reaction a fatty acyl-[ACP] + phosphate = an acyl phosphate + holo-[ACP]. The protein operates within lipid metabolism; phospholipid metabolism. Its function is as follows. Catalyzes the reversible formation of acyl-phosphate (acyl-PO(4)) from acyl-[acyl-carrier-protein] (acyl-ACP). This enzyme utilizes acyl-ACP as fatty acyl donor, but not acyl-CoA. The protein is Phosphate acyltransferase of Helicobacter acinonychis (strain Sheeba).